Consider the following 28-residue polypeptide: Trypsin inhibitor A (28 aa).

3 cysteine pairs are disulfide-bonded: Cys-3–Cys-20, Cys-10–Cys-22, and Cys-16–Cys-27.

The protein belongs to the protease inhibitor I7 (squash-type serine protease inhibitor) family.

It is found in the secreted. In terms of biological role, inhibits trypsin. This chain is Trypsin inhibitor A, found in Momordica charantia (Bitter gourd).